Consider the following 83-residue polypeptide: Small ribosomal subunit protein uS17 (83 aa).

It belongs to the universal ribosomal protein uS17 family. Part of the 30S ribosomal subunit.

In terms of biological role, one of the primary rRNA binding proteins, it binds specifically to the 5'-end of 16S ribosomal RNA. This Magnetococcus marinus (strain ATCC BAA-1437 / JCM 17883 / MC-1) protein is Small ribosomal subunit protein uS17.